The primary structure comprises 235 residues: 1-(5-phosphoribosyl)-5-[(5-phosphoribosylamino)methylideneamino] imidazole-4-carboxamide isomerase (235 aa).

The Proton acceptor role is filled by aspartate 8. Aspartate 129 serves as the catalytic Proton donor.

The protein belongs to the HisA/HisF family.

It localises to the cytoplasm. It catalyses the reaction 1-(5-phospho-beta-D-ribosyl)-5-[(5-phospho-beta-D-ribosylamino)methylideneamino]imidazole-4-carboxamide = 5-[(5-phospho-1-deoxy-D-ribulos-1-ylimino)methylamino]-1-(5-phospho-beta-D-ribosyl)imidazole-4-carboxamide. It participates in amino-acid biosynthesis; L-histidine biosynthesis; L-histidine from 5-phospho-alpha-D-ribose 1-diphosphate: step 4/9. The sequence is that of 1-(5-phosphoribosyl)-5-[(5-phosphoribosylamino)methylideneamino] imidazole-4-carboxamide isomerase from Thermoanaerobacter sp. (strain X514).